A 113-amino-acid chain; its full sequence is MNTLDFVDQASLRDDIPTFSPGDTVNVHVKVIEGSKERIQVFKGVVIRRQGGGISETFTVRKESYGVGVERTFPVHSPNIDHIDVLTRGDVRRAKLYYLRELRGKKAKIKEKR.

It belongs to the bacterial ribosomal protein bL19 family.

This protein is located at the 30S-50S ribosomal subunit interface and may play a role in the structure and function of the aminoacyl-tRNA binding site. The chain is Large ribosomal subunit protein bL19 from Mycolicibacterium smegmatis (strain ATCC 700084 / mc(2)155) (Mycobacterium smegmatis).